The sequence spans 266 residues: F-actin-capping protein subunit beta (266 aa).

It belongs to the F-actin-capping protein beta subunit family. As to quaternary structure, component of the F-actin capping complex, composed of a heterodimer of an alpha and a beta subunit.

The protein localises to the cytoplasm. Its subcellular location is the cytoskeleton. It localises to the actin patch. Functionally, F-actin-capping proteins bind in a Ca(2+)-independent manner to the fast growing ends of actin filaments (barbed end) thereby blocking the exchange of subunits at these ends. Unlike other capping proteins (such as gelsolin and severin), these proteins do not sever actin filaments. This is F-actin-capping protein subunit beta (cap2) from Emericella nidulans (strain FGSC A4 / ATCC 38163 / CBS 112.46 / NRRL 194 / M139) (Aspergillus nidulans).